The chain runs to 379 residues: Zinc finger protein 883 (379 aa).

C2H2-type zinc fingers lie at residues 13–35 (YLCTECGKGYTCLASLTQHQKTH), 41–63 (YECKICGKSFTRNSNLVQHQRIH), 69–91 (YECNECGKAFSQSTNLIQHQRVH), 97–119 (YECNECEKTFSHRSSLRNHERIH), 125–147 (YPCNECGKAFSHISALTQHHRIH), 153–175 (YECTECGKTFSRSTHLIEHQGIH), 181–203 (YQCKQCRKVFCHSTSLIRHQRTH), 209–231 (YECNECGKAFSHTPAFIQHQRIH), 237–259 (YECNACGKAFNRSAHLTEHQRTH), 265–287 (YVCKECGKTFSRSTHLTEHLKIH), 293–315 (YQCNECQKLFCYRTSLIRHQRTH), 321–343 (YQCNECGKSFSLSSALTKHKRIH), and 349–371 (YQCTKCGDVFCHSTSLIRHQKTH).

It belongs to the krueppel C2H2-type zinc-finger protein family.

Its subcellular location is the nucleus. In terms of biological role, may be involved in transcriptional regulation. The sequence is that of Zinc finger protein 883 (ZNF883) from Homo sapiens (Human).